Here is a 405-residue protein sequence, read N- to C-terminus: Putative arsenical pump-driving ATPase (405 aa).

G8 to T15 serves as a coordination point for ATP.

Belongs to the arsA ATPase family.

The enzyme catalyses arsenite(in) + ATP + H2O = arsenite(out) + ADP + phosphate + H(+). In terms of biological role, anion-transporting ATPase. Catalyzes the extrusion of arsenite. The chain is Putative arsenical pump-driving ATPase from Chlorobaculum tepidum (strain ATCC 49652 / DSM 12025 / NBRC 103806 / TLS) (Chlorobium tepidum).